The sequence spans 145 residues: Histone H3-like centromeric protein A (145 aa).

The segment covering 1–19 has biased composition (basic residues); that stretch reads MPRHTSAHKRKPSTPRRRS. Residues 1–54 are disordered; it reads MPRHTSAHKRKPSTPRRRSPPASLPPPAGSRTRRHSGPSGSSPRKKHKFRPGTR. A Phosphoserine modification is found at Ser-19. The interval 51–145 is H3-like; that stretch reads PGTRALMEIR…ARRIRGVEHM (95 aa).

Belongs to the histone H3 family. In terms of assembly, component of centromeric nucleosomes, where DNA is wrapped around a histone octamer core. The octamer contains two molecules each of H2A, H2B, CENPA and H4 assembled in one CENPA-H4 heterotetramer and two H2A-H2B heterodimers. CENPA modulates the DNA-binding characteristics of nucleosomes so that protruding DNA ends have higher flexibility than in nucleosomes containing conventional histone H3.

Its subcellular location is the nucleus. The protein localises to the chromosome. It is found in the centromere. Functionally, histone H3-like nucleosomal protein that is specifically found in centromeric nucleosomes. Replaces conventional H3 in the nucleosome core of centromeric chromatin that serves as an assembly site for the inner kinetochore. The presence of CENPA subtly modifies the nucleosome structure and the way DNA is wrapped around the nucleosome and gives rise to protruding DNA ends that are less well-ordered and rigid compared to nucleosomes containing histone H3. May serve as an epigenetic mark that propagates centromere identity through replication and cell division. Required for recruitment and assembly of kinetochore proteins, and as a consequence required for progress through mitosis, chromosome segregation and cytokinesis. In Danio rerio (Zebrafish), this protein is Histone H3-like centromeric protein A (cenpa).